The following is a 96-amino-acid chain: Co-chaperonin GroES (96 aa).

It belongs to the GroES chaperonin family. As to quaternary structure, heptamer of 7 subunits arranged in a ring. Interacts with the chaperonin GroEL.

The protein resides in the cytoplasm. Together with the chaperonin GroEL, plays an essential role in assisting protein folding. The GroEL-GroES system forms a nano-cage that allows encapsulation of the non-native substrate proteins and provides a physical environment optimized to promote and accelerate protein folding. GroES binds to the apical surface of the GroEL ring, thereby capping the opening of the GroEL channel. In Leptospira borgpetersenii serovar Hardjo-bovis (strain JB197), this protein is Co-chaperonin GroES.